Reading from the N-terminus, the 349-residue chain is 5-deoxyribose 1-phosphate isomerase (349 aa).

Substrate is bound by residues 49-51, R92, and Q199; that span reads RGA. Residue D240 is the Proton donor of the active site. 250–251 is a substrate binding site; sequence NK.

It belongs to the EIF-2B alpha/beta/delta subunits family. DrdI subfamily.

The catalysed reaction is 5-deoxy-alpha-D-ribose 1-phosphate = 5-deoxy-D-ribulose 1-phosphate. Its pathway is carbohydrate degradation. In terms of biological role, catalyzes the isomerization of 5-deoxy-alpha-D-ribose 1-phosphate to 5-deoxy-D-ribulose 1-phosphate, as part of a 5-deoxyribose salvage pathway that recycles this toxic radical SAM enzyme by-product to mainstream metabolites. This is 5-deoxyribose 1-phosphate isomerase from Clostridium botulinum (strain Okra / Type B1).